The chain runs to 195 residues: Exosome complex component CSL4 (195 aa).

A phosphoserine mark is found at Ser21 and Ser98. Positions 66-147 (DVGAIVTCKV…AQSNYLLTTA (82 aa)) constitute an S1 motif domain.

It belongs to the CSL4 family. In terms of assembly, component of the RNA exosome core complex (Exo-9), composed of EXOSC1, EXOSC2, EXOSC3, EXOSC4, EXOSC5, EXOSC6, EXOSC7, EXOSC8 and EXOSC9; within the complex interacts with EXOSC6. The catalytically inactive RNA exosome core complex (Exo-9) associates with the catalytic subunit EXOSC10/RRP6. Exo-9 may associate with DIS3 to form the nucleolar exosome complex, or DIS3L to form the cytoplasmic exosome complex. Exo-9 is formed by a hexameric base ring consisting of the heterodimers EXOSC4-EXOSC9, EXOSC5-EXOSC8 and EXOSC6-EXOSC7, and a cap ring consisting of EXOSC1, EXOSC2 and EXOSC3. The RNA exosome complex associates with cofactors C1D/RRP47, MPHOSPH6/MPP6 and MTREX/MTR4. Interacts with DDX60.

The protein localises to the nucleus. It is found in the nucleolus. It localises to the cytoplasm. Non-catalytic component of the RNA exosome complex which has 3'-&gt;5' exoribonuclease activity and participates in a multitude of cellular RNA processing and degradation events. In the nucleus, the RNA exosome complex is involved in proper maturation of stable RNA species such as rRNA, snRNA and snoRNA, in the elimination of RNA processing by-products and non-coding 'pervasive' transcripts, such as antisense RNA species and promoter-upstream transcripts (PROMPTs), and of mRNAs with processing defects, thereby limiting or excluding their export to the cytoplasm. The RNA exosome may be involved in Ig class switch recombination (CSR) and/or Ig variable region somatic hypermutation (SHM) by targeting AICDA deamination activity to transcribed dsDNA substrates. In the cytoplasm, the RNA exosome complex is involved in general mRNA turnover and specifically degrades inherently unstable mRNAs containing AU-rich elements (AREs) within their 3' untranslated regions, and in RNA surveillance pathways, preventing translation of aberrant mRNAs. It seems to be involved in degradation of histone mRNA. The catalytic inactive RNA exosome core complex of 9 subunits (Exo-9) is proposed to play a pivotal role in the binding and presentation of RNA for ribonucleolysis, and to serve as a scaffold for the association with catalytic subunits and accessory proteins or complexes. EXOSC1 as peripheral part of the Exo-9 complex stabilizes the hexameric ring of RNase PH-domain subunits through contacts with EXOSC6 and EXOSC8. This chain is Exosome complex component CSL4 (EXOSC1), found in Homo sapiens (Human).